Consider the following 122-residue polypeptide: Zein-alpha B49 (122 aa).

Belongs to the zein family.

In terms of biological role, zeins are major seed storage proteins. The protein is Zein-alpha B49 of Zea mays (Maize).